Reading from the N-terminus, the 363-residue chain is Phosphate acyltransferase (363 aa).

Residues 326 to 363 (ADSHPSKVNAGENAPPLASASNPSPEALPVGSLDRVEG) are disordered. Low complexity predominate over residues 337-354 (ENAPPLASASNPSPEALP).

It belongs to the PlsX family. As to quaternary structure, homodimer. Probably interacts with PlsY.

The protein localises to the cytoplasm. The enzyme catalyses a fatty acyl-[ACP] + phosphate = an acyl phosphate + holo-[ACP]. Its pathway is lipid metabolism; phospholipid metabolism. In terms of biological role, catalyzes the reversible formation of acyl-phosphate (acyl-PO(4)) from acyl-[acyl-carrier-protein] (acyl-ACP). This enzyme utilizes acyl-ACP as fatty acyl donor, but not acyl-CoA. The sequence is that of Phosphate acyltransferase from Synechococcus sp. (strain JA-3-3Ab) (Cyanobacteria bacterium Yellowstone A-Prime).